We begin with the raw amino-acid sequence, 520 residues long: FAD-linked oxidoreductase OXR2 (520 aa).

Residues 1 to 23 form the signal peptide; that stretch reads MKSFSLLASAGLATLASLPLTMA. N-linked (GlcNAc...) asparagine glycosylation is found at N77, N220, N378, and N390. The FAD-binding PCMH-type domain occupies 79 to 251; it reads SRPTIRLVVV…TSFQSKIYPR (173 aa).

This sequence belongs to the oxygen-dependent FAD-linked oxidoreductase family. FAD serves as cofactor.

It participates in polyketide biosynthesis. Its function is as follows. FAD-linked oxidoreductase; part of the gene cluster that mediates the biosynthesis of pyriculol and pyriculariol, two heptaketides that induce lesion formation upon application on rice leaves but are dispensable for pathogenicity. The highly reducing polyketide synthase synthesizes the heptaketide backbone of pyriculol and pyriculariol. Pyriculol and pyriculariol contain several hydroxyl moieties and double bonds, so it can be assumed that several reduction steps occur during biosynthesis. These reactions could be executed by PKS19 itself or partly by the tailoring enzymes OXR1, OXR2, RED1, RED2 or RED3, identified within the cluster. The FAD-linked oxidoreductase OXR1 is the only tailoring enzyme for which the function has been determined yet, and is involved in the oxidation of dihydropyriculol and dihydropyriculariol into pyriculol and pyriculariol, respectively. This is FAD-linked oxidoreductase OXR2 from Pyricularia oryzae (strain 70-15 / ATCC MYA-4617 / FGSC 8958) (Rice blast fungus).